The primary structure comprises 85 residues: Translational regulator CsrA (85 aa).

This sequence belongs to the CsrA/RsmA family. As to quaternary structure, homodimer; the beta-strands of each monomer intercalate to form a hydrophobic core, while the alpha-helices form wings that extend away from the core.

The protein resides in the cytoplasm. In terms of biological role, a translational regulator that binds mRNA to regulate translation initiation and/or mRNA stability. Usually binds in the 5'-UTR at or near the Shine-Dalgarno sequence preventing ribosome-binding, thus repressing translation. Its main target seems to be the major flagellin gene, while its function is anatagonized by FliW. This is Translational regulator CsrA from Leifsonia xyli subsp. xyli (strain CTCB07).